Reading from the N-terminus, the 492-residue chain is Serine/threonine protein phosphatase 2A 57 kDa regulatory subunit B' theta isoform (492 aa).

The interval 1 to 63 (MWKQILSKLP…GFKEGNLKGN (63 aa)) is disordered. Positions 16 to 39 (KNHSSSSSSTSKSSDNGASKSGNS) are enriched in low complexity. The Microbody targeting signal signature appears at 490–492 (SSL).

Belongs to the phosphatase 2A regulatory subunit B56 family. In terms of assembly, PP2A consists of a common heteromeric enzyme, composed of a catalytic subunit (subunits C), a constant regulatory subunit (subunit A), and a variety of regulatory subunits such as subunits B (the R2/B/PR55/B55, R3/B''/PR72/PR130/PR59 and R5/B'/B56 families). Interacts with BZR1. Interacts with PP2A2, PP2A5 and PP2AA2. Highly expressed in dry seeds. Expressed in roots, cotyledons, rosette leaves and flowers.

It is found in the cytoplasm. Its subcellular location is the cytosol. The protein resides in the peroxisome. In terms of biological role, the B regulatory subunit may modulate substrate selectivity and catalytic activity, and may also direct the localization of the catalytic enzyme to a particular subcellular compartment. Associates with the serine/threonine-protein phosphatase PP2A catalytic subunit C and regulatory subunit A to positively regulates beta-oxidation of fatty acids and protoauxins in peroxisomes by dephosphorylating peroxisomal beta-oxidation-related proteins. Required for the formation of the PP2A holoenzyme that negatively regulates brassinosteroid signaling by dephosphorylating and inactivating BRI1 in the cytoplasm. This chain is Serine/threonine protein phosphatase 2A 57 kDa regulatory subunit B' theta isoform (B'THETA), found in Arabidopsis thaliana (Mouse-ear cress).